Reading from the N-terminus, the 251-residue chain is 3-deoxy-manno-octulosonate cytidylyltransferase (251 aa).

Belongs to the KdsB family.

It localises to the cytoplasm. It carries out the reaction 3-deoxy-alpha-D-manno-oct-2-ulosonate + CTP = CMP-3-deoxy-beta-D-manno-octulosonate + diphosphate. It functions in the pathway nucleotide-sugar biosynthesis; CMP-3-deoxy-D-manno-octulosonate biosynthesis; CMP-3-deoxy-D-manno-octulosonate from 3-deoxy-D-manno-octulosonate and CTP: step 1/1. The protein operates within bacterial outer membrane biogenesis; lipopolysaccharide biosynthesis. Its function is as follows. Activates KDO (a required 8-carbon sugar) for incorporation into bacterial lipopolysaccharide in Gram-negative bacteria. The polypeptide is 3-deoxy-manno-octulosonate cytidylyltransferase (Chromobacterium violaceum (strain ATCC 12472 / DSM 30191 / JCM 1249 / CCUG 213 / NBRC 12614 / NCIMB 9131 / NCTC 9757 / MK)).